Here is a 785-residue protein sequence, read N- to C-terminus: Endonuclease MutS2 (785 aa).

334-341 contributes to the ATP binding site; sequence GPNTGGKT. Residues 710–785 enclose the Smr domain; that stretch reads LDLRGYNVED…GVGATIAELK (76 aa).

It belongs to the DNA mismatch repair MutS family. MutS2 subfamily. Homodimer. Binds to stalled ribosomes, contacting rRNA.

In terms of biological role, endonuclease that is involved in the suppression of homologous recombination and thus may have a key role in the control of bacterial genetic diversity. Its function is as follows. Acts as a ribosome collision sensor, splitting the ribosome into its 2 subunits. Detects stalled/collided 70S ribosomes which it binds and splits by an ATP-hydrolysis driven conformational change. Acts upstream of the ribosome quality control system (RQC), a ribosome-associated complex that mediates the extraction of incompletely synthesized nascent chains from stalled ribosomes and their subsequent degradation. Probably generates substrates for RQC. This chain is Endonuclease MutS2, found in Brevibacillus brevis (strain 47 / JCM 6285 / NBRC 100599).